The chain runs to 2453 residues: MSSSGYPPNQGAFSTEQSRYPSHSVQYTFPSARHQQEFAVPDYRSSHLEVSQASQLLQQQQQQQLRRRPSLLSEFHPGSDRPQERRSGYEQFHPGPSPVDHDSLESKRPRLEQVSDSHFQRISAAVLPLVHTLPEGLRSSANAKKDPAFGVKHEAPSSPLSGQPCGDDQNASPSKLSKEELIQSMDRVDREIAKVEQQILKLKKKQQQLEEEAAKPPEPEKPVSPPPVEQKHRSIVQIIYDENRKKAEEAHKIFEGLGPKVELPLYNQPSDTKVYHENIKTNQVMRKKLILFFKRRNHARKQREQKICQRYDQLMEAWEKKVDRIENNPRRKAKESKTREYYEKQFPEIRKQREQQERFQRVGQRGAGLSATIARSEHEISEIIDGLSEQENNEKQMRQLSVIPPMMFDAEQRRVKFINMNGLMEDPMKVYKDRQFMNVWTDHEKEIFKDKFIQHPKNFGLIASYLERKSVPDCVLYYYLTKKNENYKALVRRNYGKRRGRNQQIARPSQEEKVEEKEEDKAEKTEKKEEEKKDDEEKDDKEDSKETTKEKDRTEATAEEPEEREQVTPRGRKTANSQGRGKGRVTRSMTSEAAAANAAAAATEEPPPPLPPPPEPISTEPVETSRWTEEEMEVAKKGLVEHGRNWAAIAKMVGTKSEAQCKNFYFNYKRRHNLDNLLQQHKQKASRKPREERDVSQCESVASTVSAQEDEDIEASNEEENPEDSEGAENSSDTESAPSPSPVEAAKSSEDSSENAASRGNTEPVAELEATTDPAPCASPSSAVPTTKPAERESVEAQVTDSASAETAEPMDVDHEECGAEGSSVLDPPAPTKADSVDPEMQVPENTASKGEGDAKERDLESTSEKTEARDEDVVVAEQIERPEPQSDDDSSATCSADEGVDGEPERQRVFPMDAKPSLLTPPGSILISSPIKPNLLDLPQLQHRAAVIPPMVSCTPCNIPIGTPVSGYALYQRHIKAMHESALLEEQRQRQEQVDLECRSSTSPCSTSKSPNREWEVLQPAPHQVITNLPEGVRLPTTRPTRPPPPLIPSSKTTVASEKPSFIMGGSISQGTPGTYLSSHNQAYPQEAPKPSVGSISLGLPRQQESTKAAPLTYIKQEEFSPRSQNSQPEGLLVRAQHEGVVRGTAGAVQEGSITRGTPASKISVETISSLRGSITQGTPALPQAGIPTEALVKGPVSRMPIEESSPEKVREEAASKGHVIYEGKSGHILSYDNIKNAREGTRSPRTAHEMSLKRSYEAVEGSIKQGMSMRESPVSAPLEGLICRALPRGSPHSDLKERTVLSGSIMQGTPRATAESFEDGLKYPKQIKRESPPIRAFEGAITKGKPYDGITTIKEMGRSIHEIPRQDILTQESRKTPEVVQSTRPIIEGSISQGTPIKFDNNSGQSAIKHNVKSLITGPSKLPRGMLEIVPENIKVVERGKYEDVKAGEPVRARHTSVVSSGPSVLRSTLHEAPKAQLSPGLYDDSSARRTPVSYQNTISRGSPMMNRTSDVSSSKSASHERKSTLTPTQRESIPAKSPVPGVDPIVSHSPFDPHHRSSAAGEVYRSHLPTHLDPAMPFHRALDPAAAYLLQRQLSPTPGYPSQYQLYAMENTRQTILNDYITSQQMQVNLRPDVTRGLSPREQPLGLPYPATRGIIDLTNMPPTILVPHAGGTSTPPMDRITYIPGTQVTFPPRPYNAASLSPGHPTHLAAAASAEREREREREKERERERERERERERERIAAAPADLYLRPGSEQPGRPGSHGYVRSPSPSVRTQETILQQRPSVFQGTNGTSVITPLDPTAQLRIMPLPSGGPSISQGLPASRYNTAADALAALVDAAASAPQMDVSKTKESKHEAARLEENLRSRSAAVSEQQQLEQKNLEVEKRSVQCVCTSSALPSGKAQPHASVVYSEAGKDKGPPPKSRYEEELRTRGKTTITAANFIDVIITRQIASDKDARERGSQSSDSSSSLSSHRYETASDAIEVISPASSPAPPQEKPQAYQPDMVKANQAENESTRQYEGPLHHYRSQQESPSPQQQPPLPPSSQSEGMGQVPRTHRLITLADHICQIITQDFARNQVPSQASTSTFQTSPSALSSTPVRTKTSSRYSPESQSQTVLHPRPGPRVSPENLVDKSRGSRPGKSPERSHIPSEPYEPISPPQGPAVHEKQDSMLLLSQRGVDPAEQRSDSRSPGSISYLPSFFTKLESTSPMVKSKKQEIFRKLNSSGGGDSDMAAAQPGTEIFNLPAVTTSGAVSSRSHSFADPASNLGLEDIIRKALMGSFDDKVEDHGVVMSHPVGIMPGSASTSVVTSSEARRDEGEPSPHAGVCKPKLINKSNSRKSKSPIPGQSYLGTERPSSVSSVHSEGDYHRQTPGWAWEDRPSSTGSTQFPYNPLTIRMLSSTPPTQIACAPSAITQAAPHQQNRIWEREPAPLLSAQYETLSDSDD.

Positions Met-1–Phe-29 are enriched in polar residues. Disordered regions lie at residues Met-1–Asp-116, Pro-147–Ser-177, and Gln-206–Lys-231. Residues Met-1–Ile-373 form an interaction with ZBTB33 and HEXIM1 region. The segment covering Ser-51–Gln-64 has biased composition (low complexity). Basic and acidic residues-rich tracts occupy residues Pro-77–Gly-88 and Val-99–Asp-116. Residue Ser-172 is modified to Phosphoserine. A coiled-coil region spans residues Ser-174–Pro-216. Residues Glu-212–Lys-221 show a composition bias toward basic and acidic residues. Ser-224 carries the post-translational modification Phosphoserine. Residues Phe-254–Asp-312 are interaction with SIN3A/B. Residues Ala-299–Asn-328 adopt a coiled-coil conformation. The 52-residue stretch at Gln-435 to Asn-486 folds into the SANT 1 domain. Disordered stretches follow at residues Lys-497 to Glu-631 and Leu-677 to Gln-908. Positions Arg-501–Glu-550 form a coiled coil. 2 stretches are compositionally biased toward basic and acidic residues: residues Ser-509–Glu-531 and Lys-541–Ala-556. A compositionally biased stretch (low complexity) spans Glu-592–Glu-604. The span at Glu-605–Pro-616 shows a compositional bias: pro residues. The region spanning Val-622–Asn-673 is the SANT 2 domain. The span at Gln-697 to Ala-707 shows a compositional bias: polar residues. Residues Gln-708–Gly-727 show a composition bias toward acidic residues. The span at Thr-771 to Thr-787 shows a compositional bias: low complexity. Over residues Gly-851–Pro-885 the composition is skewed to basic and acidic residues. A Phosphoserine modification is found at Ser-1011. The tract at residues Val-1034–Ser-1058 is disordered. A Glycyl lysine isopeptide (Lys-Gly) (interchain with G-Cter in SUMO1); alternate cross-link involves residue Lys-1117. Lys-1117 participates in a covalent cross-link: Glycyl lysine isopeptide (Lys-Gly) (interchain with G-Cter in SUMO2); alternate. Ser-1122 carries the phosphoserine modification. Lys-1195 participates in a covalent cross-link: Glycyl lysine isopeptide (Lys-Gly) (interchain with G-Cter in SUMO2). Ser-1206, Ser-1207, Ser-1274, Ser-1292, and Ser-1333 each carry phosphoserine. N6-acetyllysine is present on Lys-1347. The residue at position 1378 (Thr-1378) is a Phosphothreonine. Lys-1400 is covalently cross-linked (Glycyl lysine isopeptide (Lys-Gly) (interchain with G-Cter in SUMO2)). Lys-1423 is covalently cross-linked (Glycyl lysine isopeptide (Lys-Gly) (interchain with G-Cter in SUMO2); alternate). Residue Lys-1423 is modified to N6-acetyllysine; alternate. The tract at residues Gly-1450–Gly-1544 is disordered. 2 positions are modified to phosphoserine: Ser-1459 and Ser-1481. Polar residues predominate over residues Ser-1459–Arg-1469. Polar residues predominate over residues Val-1495–Val-1514. Residues Arg-1510–Asp-2453 are interaction with C1D. Lys-1525 is covalently cross-linked (Glycyl lysine isopeptide (Lys-Gly) (interchain with G-Cter in SUMO2)). Ser-1598 is modified (phosphoserine). Disordered regions lie at residues Arg-1697 to Gln-1780 and Ala-1902 to Gly-1939. 2 stretches are compositionally biased toward basic and acidic residues: residues Ala-1718–Ile-1745 and Ala-1919–Thr-1937. Residues Ile-1949–Ile-1953 carry the CORNR box 1 motif. Positions Ser-1959–Val-2060 are disordered. Residues Ser-1968–Ser-1979 are compositionally biased toward low complexity. Ser-1993 and Ser-1997 each carry phosphoserine. The tract at residues Pro-2050–Pro-2129 is ID1. The interval Arg-2065–Thr-2068 is required for interaction with RARA in the absence of its ligand. The CORNR box 2 signature appears at Ile-2073–Ile-2077. Residues Ser-2088–Val-2124 show a composition bias toward polar residues. Residues Ser-2088–Glu-2174 are disordered. 5 positions are modified to phosphoserine: Ser-2116, Ser-2134, Ser-2150, Ser-2165, and Ser-2198. The span at Leu-2138–Ile-2156 shows a compositional bias: basic and acidic residues. Residues Ile-2226–Gly-2287 form an ID2 region. The short motif at Leu-2277–Ile-2281 is the CORNR box 3 element. A disordered region spans residues Pro-2303–Phe-2396. The span at Ser-2310–Ser-2319 shows a compositional bias: low complexity. Position 2412 is a phosphothreonine (Thr-2412). 2 positions are modified to phosphoserine: Ser-2449 and Ser-2451.

Belongs to the N-CoR nuclear receptor corepressors family. In terms of assembly, forms a large corepressor complex that contains SIN3A/B and histone deacetylases HDAC1 and HDAC2. This complex associates with the thyroid receptor (TR) and the retinoid acid receptor (RAR) in the absence of ligand. Interacts directly with RARA; the interaction is facilitated with RARA trimethylation. Component of the N-Cor repressor complex, at least composed of CBFA2T3, HEXIM1, NCOR1, NCOR2, HDAC3, TBL1X, TBL1XR1, CORO2A and GPS2. Interacts with ZBTB33; the interaction serves to recruit the N-CoR complex to promoter regions containing methylated CpG dinucleotides. Interacts with TRIM28 and KDM3A. Interacts (via the RD1 domain) with BAZ1A (via its N-terminal); the interaction corepresses a number of NCOR1-regulated genes. Interacts with BCL6, C1D, DACH1, HEXIM1, HDAC7, RORA, RORC, SAP30, SIAH2, SIN3A and SIN3B. May interact with DEAF1. Interacts with RXRA. Interacts with SETD5. Interacts with VDR. Interacts with ZBTB7A. Interacts with AR. Interacts with HDAC3. Post-translationally, ubiquitinated; mediated by SIAH2 and leading to its subsequent proteasomal degradation. As to expression, ubiquitous.

The protein localises to the nucleus. Mediates transcriptional repression by certain nuclear receptors. Part of a complex which promotes histone deacetylation and the formation of repressive chromatin structures which may impede the access of basal transcription factors. Participates in the transcriptional repressor activity produced by BCL6. Recruited by ZBTB7A to the androgen response elements/ARE on target genes, negatively regulates androgen receptor signaling and androgen-induced cell proliferation. Mediates the NR1D1-dependent repression and circadian regulation of TSHB expression. The NCOR1-HDAC3 complex regulates the circadian expression of the core clock gene ARTNL/BMAL1 and the genes involved in lipid metabolism in the liver. The sequence is that of Nuclear receptor corepressor 1 (Ncor1) from Mus musculus (Mouse).